The chain runs to 327 residues: Methionyl-tRNA formyltransferase (327 aa).

121-124 (SLLP) serves as a coordination point for (6S)-5,6,7,8-tetrahydrofolate.

The protein belongs to the Fmt family.

The catalysed reaction is L-methionyl-tRNA(fMet) + (6R)-10-formyltetrahydrofolate = N-formyl-L-methionyl-tRNA(fMet) + (6S)-5,6,7,8-tetrahydrofolate + H(+). Attaches a formyl group to the free amino group of methionyl-tRNA(fMet). The formyl group appears to play a dual role in the initiator identity of N-formylmethionyl-tRNA by promoting its recognition by IF2 and preventing the misappropriation of this tRNA by the elongation apparatus. This is Methionyl-tRNA formyltransferase from Burkholderia multivorans (strain ATCC 17616 / 249).